The following is a 308-amino-acid chain: MDFVAGAIGGVCGVAVGYPLDTVKVRIQTEPKYTGIWHCVRDTYHRERVWGFYRGLSLPVCTVSLVSSVSFGTYRHCLAHICRLRYGNPDAKPTKADITLSGCASGLVRVFLTSPTEVAKVRLQTQTQAQKQQRRLSASGPLAVPPMCPVPPACPEPKYRGPLHCLATVAREEGLCGLYKGSSALVLRDGHSFATYFLSYAVLCEWLSPAGHSRPDVPGVLVAGGCAGVLAWAVATPMDVIKSRLQADGQGQRRYRGLLHCMVTSVREEGPRVLFKGLVLNCCRAFPVNMVVFVAYEAVLRLARGLLT.

3 Solcar repeats span residues 1–80 (MDFV…CLAH), 93–206 (PTKA…LCEW), and 215–302 (PDVP…VLRL). 6 consecutive transmembrane segments (helical) span residues 3 to 23 (FVAG…LDTV), 49 to 69 (VWGF…VSSV), 98 to 116 (ITLS…TSPT), 190 to 210 (GHSF…LSPA), 217 to 237 (VPGV…VATP), and 273 to 293 (VLFK…MVVF).

It belongs to the mitochondrial carrier (TC 2.A.29) family. In terms of tissue distribution, specifically expressed in liver.

The protein resides in the mitochondrion inner membrane. It is found in the mitochondrion outer membrane. It catalyses the reaction NAD(+)(in) = NAD(+)(out). It carries out the reaction acetyl-CoA(in) = acetyl-CoA(out). Functionally, mitochondrial NAD(+) transporter that acts as a 'metabolic gate' in hepatic lipogenesis. Provides NAD(+) substrate to mitochondrial SIRT3 deacetylase and enables its NAD(+)-dependent activities in mitochondrial energy metabolism. This triggers downstream activation of PRKAA1/AMPK-alpha signaling cascade that negatively regulates sterol regulatory element-binding protein (SREBP) transcriptional activities and ATP-consuming lipogenesis to restore cellular energy balance. May transport other mitochondrial metabolites having an aromatic nucleotide and phosphate groups, such as acetyl-CoA. Does not transport amino acids. The transport mechanism remains to be elucidated. The protein is Solute carrier family 25 member 47 of Homo sapiens (Human).